The sequence spans 233 residues: Orotidine 5'-phosphate decarboxylase (233 aa).

Substrate contacts are provided by residues Asp-13, Lys-35, 62-71 (DLKFHDIPNT), Thr-122, Arg-182, Gln-191, Gly-211, and Arg-212. Lys-64 acts as the Proton donor in catalysis.

This sequence belongs to the OMP decarboxylase family. Type 1 subfamily. As to quaternary structure, homodimer.

It catalyses the reaction orotidine 5'-phosphate + H(+) = UMP + CO2. It functions in the pathway pyrimidine metabolism; UMP biosynthesis via de novo pathway; UMP from orotate: step 2/2. Catalyzes the decarboxylation of orotidine 5'-monophosphate (OMP) to uridine 5'-monophosphate (UMP). This chain is Orotidine 5'-phosphate decarboxylase, found in Pseudomonas putida (strain ATCC 700007 / DSM 6899 / JCM 31910 / BCRC 17059 / LMG 24140 / F1).